The following is a 338-amino-acid chain: Ferredoxin--NADP reductase (338 aa).

Residues Asp-38, Gln-46, Tyr-51, Val-91, Phe-125, Asp-291, and Thr-331 each contribute to the FAD site.

The protein belongs to the ferredoxin--NADP reductase type 2 family. Homodimer. Requires FAD as cofactor.

The catalysed reaction is 2 reduced [2Fe-2S]-[ferredoxin] + NADP(+) + H(+) = 2 oxidized [2Fe-2S]-[ferredoxin] + NADPH. The protein is Ferredoxin--NADP reductase of Orientia tsutsugamushi (strain Ikeda) (Rickettsia tsutsugamushi).